The sequence spans 756 residues: Ent-kaur-16-ene synthase, chloroplastic (756 aa).

Aspartate 496, aspartate 500, asparagine 639, and glutamate 647 together coordinate Mg(2+). A DDXXD motif motif is present at residues 496-500 (DDFFD).

It belongs to the terpene synthase family. The cofactor is Mg(2+). Highly expressed in panicles and at lower levels in leaves and stems.

It localises to the plastid. It is found in the chloroplast. It catalyses the reaction ent-copalyl diphosphate = ent-kaur-16-ene + diphosphate. It participates in plant hormone biosynthesis; gibberellin biosynthesis. Functionally, catalyzes the conversion of ent-copalyl diphosphate to the gibberellin precursor ent-kaur-16-ene. This Oryza sativa subsp. japonica (Rice) protein is Ent-kaur-16-ene synthase, chloroplastic (KS1).